The sequence spans 106 residues: Small ribosomal subunit protein bS16 (106 aa).

The segment at 84–106 (KREARNNPEKAVPRKERKAADGK) is disordered.

This chain is Small ribosomal subunit protein bS16, found in Rhodopseudomonas palustris (strain ATCC BAA-98 / CGA009).